The chain runs to 325 residues: Pyruvate dehydrogenase E1 component subunit beta (325 aa).

Glu60 contributes to the thiamine diphosphate binding site.

Heterodimer of an alpha and a beta chain. Thiamine diphosphate serves as cofactor.

The catalysed reaction is N(6)-[(R)-lipoyl]-L-lysyl-[protein] + pyruvate + H(+) = N(6)-[(R)-S(8)-acetyldihydrolipoyl]-L-lysyl-[protein] + CO2. In terms of biological role, the pyruvate dehydrogenase complex catalyzes the overall conversion of pyruvate to acetyl-CoA and CO(2). It contains multiple copies of three enzymatic components: pyruvate dehydrogenase (E1), dihydrolipoamide acetyltransferase (E2) and lipoamide dehydrogenase (E3). The chain is Pyruvate dehydrogenase E1 component subunit beta (pdhB) from Staphylococcus aureus (strain COL).